We begin with the raw amino-acid sequence, 83 residues long: Small ribosomal subunit protein bS16 (83 aa).

This sequence belongs to the bacterial ribosomal protein bS16 family.

The chain is Small ribosomal subunit protein bS16 from Polaromonas sp. (strain JS666 / ATCC BAA-500).